Reading from the N-terminus, the 189-residue chain is 2-oxoglutarate synthase subunit KorC (189 aa).

In terms of assembly, heterotetramer of the KorA, KorB, KorC and KorD subunits.

It carries out the reaction 2 oxidized [2Fe-2S]-[ferredoxin] + 2-oxoglutarate + CoA = succinyl-CoA + 2 reduced [2Fe-2S]-[ferredoxin] + CO2 + H(+). In Methanothermobacter thermautotrophicus (strain ATCC 29096 / DSM 1053 / JCM 10044 / NBRC 100330 / Delta H) (Methanobacterium thermoautotrophicum), this protein is 2-oxoglutarate synthase subunit KorC (korC).